We begin with the raw amino-acid sequence, 226 residues long: DNA mismatch repair protein MutH (226 aa).

It belongs to the MutH family.

It localises to the cytoplasm. Functionally, sequence-specific endonuclease that cleaves unmethylated GATC sequences. It is involved in DNA mismatch repair. This chain is DNA mismatch repair protein MutH, found in Actinobacillus pleuropneumoniae serotype 3 (strain JL03).